The chain runs to 348 residues: 4-hydroxy-2-oxovalerate aldolase 3 (348 aa).

A Pyruvate carboxyltransferase domain is found at 8 to 260; that stretch reads ITVHDMTLRD…ETGVDVWKIQ (253 aa). Substrate is bound at residue 16 to 17; it reads RD. Asp17 contacts Mn(2+). The active-site Proton acceptor is His20. Substrate is bound by residues Ser170 and His199. Mn(2+) contacts are provided by His199 and His201. Residue Tyr290 participates in substrate binding.

It belongs to the 4-hydroxy-2-oxovalerate aldolase family.

The catalysed reaction is (S)-4-hydroxy-2-oxopentanoate = acetaldehyde + pyruvate. The chain is 4-hydroxy-2-oxovalerate aldolase 3 from Burkholderia lata (strain ATCC 17760 / DSM 23089 / LMG 22485 / NCIMB 9086 / R18194 / 383).